Here is a 606-residue protein sequence, read N- to C-terminus: Gamma-aminobutyric acid receptor subunit beta (606 aa).

The first 44 residues, 1-44 (MSDSKMDKLARMAPLPRTPLLTIWLAINMALIAQETGHKRIHTV), serve as a signal peptide directing secretion. Residues 45 to 268 (QAATGGGSML…CEIQFVRSMG (224 aa)) lie on the Extracellular side of the membrane. N-linked (GlcNAc...) asparagine glycosylation is present at Asn58. A disulfide bridge links Cys185 with Cys199. An N-linked (GlcNAc...) asparagine glycan is attached at Asn253. 3 helical membrane passes run 269 to 291 (YYLIQIYIPSGLIVIISWVSFWL), 297 to 316 (PARVALGVTTVLTMTTLMSS), and 333 to 356 (YLGTCFVMVFASLLEYATVGYMAK). Residues 357–568 (RIQMRKQRFM…LGITPSDIDK (212 aa)) are Cytoplasmic-facing. Disordered regions lie at residues 376 to 451 (KQQL…VSNR) and 482 to 542 (HDPK…AAVP). Over residues 381-395 (GANQQQANPNPNANV) the composition is skewed to low complexity. Positions 396–425 (GGPGGVGVGPGGPGGPGGGVNVGVGMGMGP) are enriched in gly residues. Positions 430–443 (GHGHHAHSHGHPHA) are enriched in basic residues. Residues 499 to 536 (GGRGGPQSHGPGPGQGGGPPGGGGGGGGGGGPPEGGGD) are compositionally biased toward gly residues. The chain crosses the membrane as a helical span at residues 569–590 (YSRIVFPVCFVCFNLMYWIIYL).

Belongs to the ligand-gated ion channel (TC 1.A.9) family. Gamma-aminobutyric acid receptor (TC 1.A.9.5) subfamily. In terms of assembly, forms oligomers. Interacts with Nlg4; the interaction mediates Rdl clustering. Interacts with Fbxl4; the interaction mediates Rdl degradation. Expressed in different parts of the brain: the mushroom bodies (alpha, alpha', beta, beta', gamma lobes and peduncles), the neurons projecting to the columnar-type neuron LC9 optic glomerulus, in interneurons connecting the paired olfactory lobes, antennal lobes, PDF-expressing small and large ventral lateral neurons (LNvs) of the circadian clock and lobula columnar neuron 11 (LC11) (at protein level). Expressed in all major ON pathway medulla neurons (Mi1, Tm3, Mi4, and Mi9) and in OFF pathway neurons (Tm1, Tm2, Tm4, and Tm9).

It localises to the cell membrane. Its subcellular location is the postsynaptic cell membrane. It is found in the cell projection. The protein localises to the dendrite. The protein resides in the axon. With respect to regulation, activated by agonist muscimol. Insensitive to zinc, glycine, glutamate, and baclofen, loreclezole, to antagonist bicuculline, glycine-receptor antagonist strychnine, and nonselective GABA and glycine antagonist RU 5135. Insensitive to flunitrazepam, pentobarbitone or pregnane steroids such as 5alpha-pregnan-3alpha-ol-20-one. Inhibited by insecticides picrotoxin (PTX), cyclodiene dieldrin, TBPS and lindane. Inhibited by ivermectin, fipronil and pyrafluprole. Inhibited by insecticides picrotoxin (PTX). In terms of biological role, gamma-aminobutyric acid (GABA) receptor voltage channel subunit. GABA, an inhibitory neurotransmitter, mediates neuronal inhibition by binding to the GABA receptor and opening an integral chloride channel. Together with glutamate receptor GluClalpha, plays an important role in the visual response by regulating the activity of ON/OFF-selective neurons. Plays a role in promoting sleep and sleep latency by regulating the activity of peptidergic PDF neurons. In large ventral lateral clock neurons, clustering is mediated by Nlg4 and protein levels undergo daily degradation in response to the circadian clock. In neurons in the mushroom bodies, has a role in odor memory acquisition where it inhibits appetitive and aversive olfactory learning, probably upstream of Adcy1/adenylate cyclase 1 and GTPase activating protein Nf1. In male-specific GABAergic neurons, plays a role in inhibiting male aggressive behavior during courtship. Functionally, gamma-aminobutyric acid (GABA) receptor voltage channel subunit. This Drosophila melanogaster (Fruit fly) protein is Gamma-aminobutyric acid receptor subunit beta (Rdl).